We begin with the raw amino-acid sequence, 176 residues long: Transcriptional repressor NrdR (176 aa).

A zinc finger spans residues 3–34 (CPYCGSLETQVKDSRPTDDASAIRRRRVCPDC). An ATP-cone domain is found at 49 to 139 (LTVLKKSGRR…VYRNFREARD (91 aa)). The tract at residues 147–176 (LDGAAQPEAPSKDDGGTDEPPAKTRAPTRA) is disordered.

Belongs to the NrdR family. Zn(2+) is required as a cofactor.

Negatively regulates transcription of bacterial ribonucleotide reductase nrd genes and operons by binding to NrdR-boxes. This is Transcriptional repressor NrdR from Methylocella silvestris (strain DSM 15510 / CIP 108128 / LMG 27833 / NCIMB 13906 / BL2).